The chain runs to 192 residues: Putative ripening-related protein 2 (192 aa).

The N-terminal stretch at 1-26 (MATTNCLLALAIAGLVLVSLPGLSRG) is a signal peptide.

It belongs to the kiwellin family.

It localises to the secreted. In Oryza sativa subsp. japonica (Rice), this protein is Putative ripening-related protein 2.